Consider the following 183-residue polypeptide: MPQPAKVLLLYAHPESQDSVANRVLLKPAIQHNNVTVHDLYARYPDFFIDTPYEQALLREHDVIVFQHPLYTYSCPALLKEWLDRVLSRGFASGPGGNQLVGKYWRSVITTGEPESAYRYDALNRYPMSDVLRPFELTAAMCRMHWMPPIIVYWARRQSPQTLASHAKAYGEWLANPVSAGGY.

This sequence belongs to the NAD(P)H dehydrogenase (quinone) family. KefG subfamily. As to quaternary structure, interacts with KefB.

It is found in the cell inner membrane. The enzyme catalyses a quinone + NADH + H(+) = a quinol + NAD(+). It catalyses the reaction a quinone + NADPH + H(+) = a quinol + NADP(+). Regulatory subunit of a potassium efflux system that confers protection against electrophiles. Required for full activity of KefB. The sequence is that of Glutathione-regulated potassium-efflux system ancillary protein KefG from Salmonella paratyphi B (strain ATCC BAA-1250 / SPB7).